A 626-amino-acid polypeptide reads, in one-letter code: Probable potassium transport system protein Kup (626 aa).

The next 12 helical transmembrane spans lie at 11-31 (FLTL…TSPL), 55-75 (LSLI…VFVM), 103-123 (AWII…GMIT), 140-160 (AALS…LFLI), 171-191 (LFGP…FVSL), 216-236 (LGFA…ALYA), 250-270 (WFAV…ALLI), 282-302 (LLVP…ATVI), 340-360 (IYAP…VLAF), 369-389 (AYGL…LVVA), 395-415 (WPGL…LSFL), and 422-442 (LGDG…VMST).

Belongs to the HAK/KUP transporter (TC 2.A.72) family.

The protein localises to the cell inner membrane. It catalyses the reaction K(+)(in) + H(+)(in) = K(+)(out) + H(+)(out). Functionally, transport of potassium into the cell. Likely operates as a K(+):H(+) symporter. In Methylococcus capsulatus (strain ATCC 33009 / NCIMB 11132 / Bath), this protein is Probable potassium transport system protein Kup.